Consider the following 356-residue polypeptide: 4-hydroxybenzoate polyprenyltransferase, mitochondrial (356 aa).

Residues 1–44 (MITRSIGIARRSNSINCIVGSNTSTSYSLDESTKRWISTSTKQP) constitute a mitochondrion transit peptide. Helical transmembrane passes span 71-91 (VDKP…IAMA), 93-113 (PAGQ…AFLM), 150-170 (AIGL…QLNW), 195-215 (WPQF…WCAL), 269-289 (WLSA…IASD), and 332-352 (IILF…QILI).

This sequence belongs to the UbiA prenyltransferase family. Requires Mg(2+) as cofactor.

The protein localises to the mitochondrion inner membrane. The enzyme catalyses an all-trans-polyprenyl diphosphate + 4-hydroxybenzoate = a 4-hydroxy-3-(all-trans-polyprenyl)benzoate + diphosphate. It participates in cofactor biosynthesis; ubiquinone biosynthesis. Catalyzes the prenylation of para-hydroxybenzoate (PHB) with an all-trans polyprenyl group. Mediates the second step in the final reaction sequence of coenzyme Q (CoQ) biosynthesis, which is the condensation of the polyisoprenoid side chain with PHB, generating the first membrane-bound Q intermediate. The polypeptide is 4-hydroxybenzoate polyprenyltransferase, mitochondrial (coq-2) (Caenorhabditis elegans).